Consider the following 211-residue polypeptide: Transcription antitermination protein NusB (211 aa).

The segment at Pro-152 to Lys-211 is disordered. Residues Asn-175–Pro-188 are compositionally biased toward polar residues.

Belongs to the NusB family.

Functionally, involved in transcription antitermination. Required for transcription of ribosomal RNA (rRNA) genes. Binds specifically to the boxA antiterminator sequence of the ribosomal RNA (rrn) operons. The chain is Transcription antitermination protein NusB from Chloroherpeton thalassium (strain ATCC 35110 / GB-78).